Consider the following 153-residue polypeptide: Small ribosomal subunit protein uS19A (153 aa).

The protein belongs to the universal ribosomal protein uS19 family. In terms of assembly, component of the small ribosomal subunit (SSU). Mature yeast ribosomes consist of a small (40S) and a large (60S) subunit. The 40S small subunit contains 1 molecule of ribosomal RNA (18S rRNA) and at least 33 different proteins. The large 60S subunit contains 3 rRNA molecules (25S, 5.8S and 5S rRNA) and at least 46 different proteins.

The protein localises to the cytoplasm. The protein resides in the nucleus. It is found in the nucleolus. In terms of biological role, component of the ribosome, a large ribonucleoprotein complex responsible for the synthesis of proteins in the cell. The small ribosomal subunit (SSU) binds messenger RNAs (mRNAs) and translates the encoded message by selecting cognate aminoacyl-transfer RNA (tRNA) molecules. The large subunit (LSU) contains the ribosomal catalytic site termed the peptidyl transferase center (PTC), which catalyzes the formation of peptide bonds, thereby polymerizing the amino acids delivered by tRNAs into a polypeptide chain. The nascent polypeptides leave the ribosome through a tunnel in the LSU and interact with protein factors that function in enzymatic processing, targeting, and the membrane insertion of nascent chains at the exit of the ribosomal tunnel. uS19 is involved in the nuclear export of the small ribosomal subunit precursor. Has a role in the late stage of the assembly of pre-40S particles within the nucleus and controls their export to the cytoplasm. The polypeptide is Small ribosomal subunit protein uS19A (rps1501) (Schizosaccharomyces pombe (strain 972 / ATCC 24843) (Fission yeast)).